The sequence spans 206 residues: uncharacterized protein (206 aa).

Residues 166-186 (FYTGLSVIVGGATALALGLFF) traverse the membrane as a helical segment.

Its subcellular location is the membrane. This is an uncharacterized protein from Dictyostelium discoideum (Social amoeba).